Consider the following 176-residue polypeptide: Translation initiation factor IF-3 (176 aa).

This sequence belongs to the IF-3 family. As to quaternary structure, monomer.

It localises to the cytoplasm. IF-3 binds to the 30S ribosomal subunit and shifts the equilibrium between 70S ribosomes and their 50S and 30S subunits in favor of the free subunits, thus enhancing the availability of 30S subunits on which protein synthesis initiation begins. This Streptococcus pyogenes serotype M4 (strain MGAS10750) protein is Translation initiation factor IF-3.